Here is a 222-residue protein sequence, read N- to C-terminus: Uracil-DNA glycosylase (222 aa).

Residue Asp61 is the Proton acceptor of the active site.

This sequence belongs to the uracil-DNA glycosylase (UDG) superfamily. UNG family.

It localises to the cytoplasm. The enzyme catalyses Hydrolyzes single-stranded DNA or mismatched double-stranded DNA and polynucleotides, releasing free uracil.. In terms of biological role, excises uracil residues from the DNA which can arise as a result of misincorporation of dUMP residues by DNA polymerase or due to deamination of cytosine. In Aeromonas salmonicida (strain A449), this protein is Uracil-DNA glycosylase.